The primary structure comprises 84 residues: Cell division topological specificity factor (84 aa).

This sequence belongs to the MinE family.

Functionally, prevents the cell division inhibition by proteins MinC and MinD at internal division sites while permitting inhibition at polar sites. This ensures cell division at the proper site by restricting the formation of a division septum at the midpoint of the long axis of the cell. This Burkholderia multivorans (strain ATCC 17616 / 249) protein is Cell division topological specificity factor.